A 341-amino-acid chain; its full sequence is Phenylalanine--tRNA ligase alpha subunit (341 aa).

Residue E254 participates in Mg(2+) binding.

The protein belongs to the class-II aminoacyl-tRNA synthetase family. Phe-tRNA synthetase alpha subunit type 1 subfamily. In terms of assembly, tetramer of two alpha and two beta subunits. Requires Mg(2+) as cofactor.

It localises to the cytoplasm. It carries out the reaction tRNA(Phe) + L-phenylalanine + ATP = L-phenylalanyl-tRNA(Phe) + AMP + diphosphate + H(+). The sequence is that of Phenylalanine--tRNA ligase alpha subunit (pheS) from Mycoplasma pneumoniae (strain ATCC 29342 / M129 / Subtype 1) (Mycoplasmoides pneumoniae).